A 168-amino-acid chain; its full sequence is Crossover junction endodeoxyribonuclease RuvC (168 aa).

Residues Asp7, Glu66, and Asp138 contribute to the active site. Mg(2+) contacts are provided by Asp7, Glu66, and Asp138.

It belongs to the RuvC family. Homodimer which binds Holliday junction (HJ) DNA. The HJ becomes 2-fold symmetrical on binding to RuvC with unstacked arms; it has a different conformation from HJ DNA in complex with RuvA. In the full resolvosome a probable DNA-RuvA(4)-RuvB(12)-RuvC(2) complex forms which resolves the HJ. Mg(2+) serves as cofactor.

It localises to the cytoplasm. It carries out the reaction Endonucleolytic cleavage at a junction such as a reciprocal single-stranded crossover between two homologous DNA duplexes (Holliday junction).. The RuvA-RuvB-RuvC complex processes Holliday junction (HJ) DNA during genetic recombination and DNA repair. Endonuclease that resolves HJ intermediates. Cleaves cruciform DNA by making single-stranded nicks across the HJ at symmetrical positions within the homologous arms, yielding a 5'-phosphate and a 3'-hydroxyl group; requires a central core of homology in the junction. The consensus cleavage sequence is 5'-(A/T)TT(C/G)-3'. Cleavage occurs on the 3'-side of the TT dinucleotide at the point of strand exchange. HJ branch migration catalyzed by RuvA-RuvB allows RuvC to scan DNA until it finds its consensus sequence, where it cleaves and resolves the cruciform DNA. This Cereibacter sphaeroides (strain ATCC 17029 / ATH 2.4.9) (Rhodobacter sphaeroides) protein is Crossover junction endodeoxyribonuclease RuvC.